Here is a 134-residue protein sequence, read N- to C-terminus: Outer membrane lipoprotein RcsF (134 aa).

A signal peptide spans 1 to 15; it reads MRALPICLVALMLSG. Cys16 carries N-palmitoyl cysteine lipidation. Cys16 is lipidated: S-diacylglycerol cysteine. Disordered regions lie at residues 22 to 48 and 67 to 88; these read SPVEPVQSTAPQPKAEPAKPKAPRATP and GEVSGDSCQASNQDSPPSIPTA. Over residues 72–82 the composition is skewed to polar residues; the sequence is DSCQASNQDSP. Cystine bridges form between Cys74-Cys118 and Cys109-Cys124.

Belongs to the RcsF family.

It is found in the cell outer membrane. Essential component of the Rcs signaling system, which controls transcription of numerous genes. Plays a role in signal transduction from the cell surface to the histidine kinase RcsC. May detect outer membrane defects. This is Outer membrane lipoprotein RcsF from Escherichia coli O6:H1 (strain CFT073 / ATCC 700928 / UPEC).